Consider the following 23-residue polypeptide: Alyteserin-1c (23 aa).

S23 bears the Serine amide mark.

In terms of tissue distribution, expressed by the skin glands.

The protein resides in the secreted. Its subcellular location is the target cell membrane. Functionally, antibacterial peptide with amphipathic alpha-helical structure that shows selective growth-inhibitory activity against Gram-negative bacteria but low hemolytic activity against human erythrocytes (LC(50)=145-220 uM). It is moderately active against the Gram-negative bacteria E.coli (MIC=25 uM), K.pneumoniae (MIC=50 uM), P.aeruginosa (MIC=25 uM), A.baumannii (MIC=6 uM), and is weaky active against the Gram-positive S.aureus (MIC=100-250 uM). The chain is Alyteserin-1c from Alytes obstetricans (Common midwife toad).